We begin with the raw amino-acid sequence, 439 residues long: Xaa-Pro dipeptidase (439 aa).

Mn(2+)-binding residues include Asp244, Asp255, His335, Glu380, and Glu419.

This sequence belongs to the peptidase M24B family. Bacterial-type prolidase subfamily. Mn(2+) is required as a cofactor.

The catalysed reaction is Xaa-L-Pro dipeptide + H2O = an L-alpha-amino acid + L-proline. In terms of biological role, splits dipeptides with a prolyl residue in the C-terminal position. The polypeptide is Xaa-Pro dipeptidase (Shewanella sp. (strain MR-7)).